A 1079-amino-acid chain; its full sequence is DNA-directed RNA polymerase subunit beta (1079 aa).

Residues 963–982 are disordered; sequence RSTGPYSRVTQQPVKGRARR. Residues 966–975 are compositionally biased toward polar residues; sequence GPYSRVTQQP.

It belongs to the RNA polymerase beta chain family. As to quaternary structure, in plastids the minimal PEP RNA polymerase catalytic core is composed of four subunits: alpha, beta, beta', and beta''. When a (nuclear-encoded) sigma factor is associated with the core the holoenzyme is formed, which can initiate transcription.

Its subcellular location is the plastid. It is found in the chloroplast. It catalyses the reaction RNA(n) + a ribonucleoside 5'-triphosphate = RNA(n+1) + diphosphate. DNA-dependent RNA polymerase catalyzes the transcription of DNA into RNA using the four ribonucleoside triphosphates as substrates. The sequence is that of DNA-directed RNA polymerase subunit beta from Pelargonium hortorum (Common geranium).